Consider the following 601-residue polypeptide: Elongation factor 4 (601 aa).

The tr-type G domain occupies 6–188 (QCIRNFSIIA…AVVAKVPPPQ (183 aa)). GTP-binding positions include 18-23 (DHGKST) and 135-138 (NKID).

It belongs to the TRAFAC class translation factor GTPase superfamily. Classic translation factor GTPase family. LepA subfamily.

Its subcellular location is the cell membrane. It catalyses the reaction GTP + H2O = GDP + phosphate + H(+). Functionally, required for accurate and efficient protein synthesis under certain stress conditions. May act as a fidelity factor of the translation reaction, by catalyzing a one-codon backward translocation of tRNAs on improperly translocated ribosomes. Back-translocation proceeds from a post-translocation (POST) complex to a pre-translocation (PRE) complex, thus giving elongation factor G a second chance to translocate the tRNAs correctly. Binds to ribosomes in a GTP-dependent manner. This chain is Elongation factor 4, found in Desulfitobacterium hafniense (strain DSM 10664 / DCB-2).